The sequence spans 234 residues: Thrombin-like enzyme acutin (234 aa).

Met1 is a propeptide. The Peptidase S1 domain maps to 2–225 (VIGGDECDIN…YTDWIQRNIA (224 aa)). Cystine bridges form between Cys8–Cys140, Cys27–Cys43, Cys75–Cys232, Cys119–Cys186, Cys151–Cys165, and Cys176–Cys201. A glycan (N-linked (GlcNAc...) asparagine) is linked at Asn21. Active-site charge relay system residues include His42 and Asp87. The Charge relay system role is filled by Ser180.

This sequence belongs to the peptidase S1 family. Snake venom subfamily. As to quaternary structure, monomer. As to expression, expressed by the venom gland.

It is found in the secreted. Thrombin-like snake venom serine protease. Has arginyl esterase and fibrinogen clotting activities. The polypeptide is Thrombin-like enzyme acutin (Deinagkistrodon acutus (Hundred-pace snake)).